Here is a 132-residue protein sequence, read N- to C-terminus: MVKHQTQKKGVKRKQLKNIPSGVVHVKATFNNTIVSITDPAGNTISWASAGKVGYSGSRKSSAFAATMAAQDAAKNAMNSGLKEVEVCLKGTGAGRESAVRALIASGLVVSVIRDETPVPHNGCRPRKRRRV.

The protein belongs to the universal ribosomal protein uS11 family. Part of the 30S ribosomal subunit. Interacts with proteins S7 and S18. Binds to IF-3.

Located on the platform of the 30S subunit, it bridges several disparate RNA helices of the 16S rRNA. Forms part of the Shine-Dalgarno cleft in the 70S ribosome. The protein is Small ribosomal subunit protein uS11 of Chlamydia caviae (strain ATCC VR-813 / DSM 19441 / 03DC25 / GPIC) (Chlamydophila caviae).